Here is a 184-residue protein sequence, read N- to C-terminus: Photosystem I assembly protein Ycf4 (184 aa).

A run of 2 helical transmembrane segments spans residues 19-39 and 57-77; these read ISNF…LLVG and IIFF…LFIS.

It belongs to the Ycf4 family.

It localises to the plastid. It is found in the chloroplast thylakoid membrane. Seems to be required for the assembly of the photosystem I complex. This Nicotiana sylvestris (Wood tobacco) protein is Photosystem I assembly protein Ycf4.